The following is a 157-amino-acid chain: Protein NrdI (157 aa).

The protein belongs to the NrdI family.

Functionally, probably involved in ribonucleotide reductase function. This chain is Protein NrdI, found in Mycoplasma capricolum subsp. capricolum (strain California kid / ATCC 27343 / NCTC 10154).